Reading from the N-terminus, the 222-residue chain is Phosphate-specific transport system accessory protein PhoU homolog 1 (222 aa).

Belongs to the PhoU family. As to quaternary structure, homodimer.

Its subcellular location is the cytoplasm. Functionally, plays a role in the regulation of phosphate uptake. The polypeptide is Phosphate-specific transport system accessory protein PhoU homolog 1 (phoU1) (Mycobacterium leprae (strain TN)).